The following is a 523-amino-acid chain: Effector protein hopAB1 (523 aa).

Disordered stretches follow at residues 1-94, 165-223, and 299-320; these read MPGI…EAQQ, VRQQ…QGLD, and RQTT…SGRR. The segment covering 18–31 has biased composition (basic and acidic residues); the sequence is TDGEPVTEREHDSS. Low complexity predominate over residues 181 to 194; sequence SSSGSSQRSLIGRS.

Belongs to the HopAB family.

It is found in the secreted. Its function is as follows. Effector protein that plays different roles depending on the species and plant cultivars that interact with the pathogen. Acts as a virulence determinant by enhancing the development of disease symptoms and bacterial growth. Acts as an avirulence factor by eliciting hypersensitive response (HR) and plant resistance. This chain is Effector protein hopAB1 (hopAB1), found in Pseudomonas savastanoi pv. glycinea (Pseudomonas syringae pv. glycinea).